The sequence spans 382 residues: UDP-4-amino-4-deoxy-L-arabinose--oxoglutarate aminotransferase (382 aa).

K183 is modified (N6-(pyridoxal phosphate)lysine).

This sequence belongs to the DegT/DnrJ/EryC1 family. ArnB subfamily. As to quaternary structure, homodimer. Pyridoxal 5'-phosphate is required as a cofactor.

It catalyses the reaction UDP-4-amino-4-deoxy-beta-L-arabinose + 2-oxoglutarate = UDP-beta-L-threo-pentopyranos-4-ulose + L-glutamate. Its pathway is nucleotide-sugar biosynthesis; UDP-4-deoxy-4-formamido-beta-L-arabinose biosynthesis; UDP-4-deoxy-4-formamido-beta-L-arabinose from UDP-alpha-D-glucuronate: step 2/3. It functions in the pathway bacterial outer membrane biogenesis; lipopolysaccharide biosynthesis. In terms of biological role, catalyzes the conversion of UDP-4-keto-arabinose (UDP-Ara4O) to UDP-4-amino-4-deoxy-L-arabinose (UDP-L-Ara4N). The modified arabinose is attached to lipid A and is required for resistance to polymyxin and cationic antimicrobial peptides. This is UDP-4-amino-4-deoxy-L-arabinose--oxoglutarate aminotransferase from Pseudomonas fluorescens (strain Pf0-1).